Consider the following 230-residue polypeptide: tRNA (guanine-N(7)-)-methyltransferase (230 aa).

S-adenosyl-L-methionine is bound by residues glutamate 61, glutamate 86, aspartate 113, and aspartate 135. Aspartate 135 is a catalytic residue. Substrate contacts are provided by residues lysine 139, aspartate 171, and 209 to 212; that span reads TRYE.

The protein belongs to the class I-like SAM-binding methyltransferase superfamily. TrmB family.

It catalyses the reaction guanosine(46) in tRNA + S-adenosyl-L-methionine = N(7)-methylguanosine(46) in tRNA + S-adenosyl-L-homocysteine. Its pathway is tRNA modification; N(7)-methylguanine-tRNA biosynthesis. In terms of biological role, catalyzes the formation of N(7)-methylguanine at position 46 (m7G46) in tRNA. The protein is tRNA (guanine-N(7)-)-methyltransferase of Rhizobium etli (strain ATCC 51251 / DSM 11541 / JCM 21823 / NBRC 15573 / CFN 42).